The primary structure comprises 183 residues: Large ribosomal subunit protein uL5 (183 aa).

The protein belongs to the universal ribosomal protein uL5 family. As to quaternary structure, part of the 50S ribosomal subunit; part of the 5S rRNA/L5/L18/L25 subcomplex. Contacts the 5S rRNA and the P site tRNA. Forms a bridge to the 30S subunit in the 70S ribosome.

This is one of the proteins that bind and probably mediate the attachment of the 5S RNA into the large ribosomal subunit, where it forms part of the central protuberance. In the 70S ribosome it contacts protein S13 of the 30S subunit (bridge B1b), connecting the 2 subunits; this bridge is implicated in subunit movement. Contacts the P site tRNA; the 5S rRNA and some of its associated proteins might help stabilize positioning of ribosome-bound tRNAs. This is Large ribosomal subunit protein uL5 from Tropheryma whipplei (strain TW08/27) (Whipple's bacillus).